The sequence spans 348 residues: Trace amine-associated receptor 9 (348 aa).

Residues 1–33 lie on the Extracellular side of the membrane; it reads MVNNFSQAEAVELCYKNVNESCIKTPYSPGPRS. Residues Asn4 and Asn19 are each glycosylated (N-linked (GlcNAc...) asparagine). Disulfide bonds link Cys22/Cys186 and Cys105/Cys190. The chain crosses the membrane as a helical span at residues 34-58; it reads ILYAVLGFGAVLAAFGNLLVMIAIL. The Cytoplasmic segment spans residues 59–68; that stretch reads HFKQLHTPTN. Residues 69–90 traverse the membrane as a helical segment; sequence FLIASLACADFLVGVTVMPFST. The Extracellular segment spans residues 91 to 105; that stretch reads VRSVESCWYFGDSYC. A helical membrane pass occupies residues 106-128; sequence KFHTCFDTSFCFASLFHLCCISV. Positions 112 and 113 each coordinate spermidine. Residues 129–148 lie on the Cytoplasmic side of the membrane; that stretch reads DRYIAVTDPLTYPTKFTVSV. Residues 149-170 form a helical membrane-spanning segment; sequence SGICIVLSWFFSVTYSFSIFYT. Over 171–196 the chain is Extracellular; it reads GANEEGIEELVVALTCVGGCQAPLNQ. The extracellular Loop 2 (ECL2) stretch occupies residues 174–187; it reads EEGIEELVVALTCV. Residues 197–218 traverse the membrane as a helical segment; that stretch reads NWVLLCFLLFFIPNVAMVFIYS. Residues 219–256 lie on the Cytoplasmic side of the membrane; it reads KIFLVAKHQARKIESTASQAQSSSESYKERVAKRERKA. Residues 257–280 form a helical membrane-spanning segment; that stretch reads AKTLGIAMAAFLVSWLPYLVDAVI. The Extracellular segment spans residues 281–293; it reads DAYMNFITPPYVY. Residues 294–314 form a helical membrane-spanning segment; that stretch reads EILVWCVYYNSAMNPLIYAFF. Topologically, residues 315-348 are cytoplasmic; that stretch reads YQWFGKAIKLIVSGKVLRTDSSTTNLFSEEVETD.

This sequence belongs to the G-protein coupled receptor 1 family.

It is found in the cell membrane. Olfactory receptor specific for trace amines, such as N,N-dimethylcyclohexylamine (DMCHA) and beta-phenylethylamine (beta-PEA). In contrast to mouse and rat orthologs, not activated by triethylamine, cadaverine (CAD) or spermidine. Trace amine compounds are enriched in animal body fluids and act on trace amine-associated receptors (TAARs) to elicit both intraspecific and interspecific innate behaviors. Trace amine-binding causes a conformation change that triggers signaling via G(s)-class of G alpha proteins (GNAL or GNAS). In mature olfactory sensory neurons, TAAR9 is coupled with GNAL/G(olf)G alpha protein and mediates activation of adenylate cyclase activity to activate cAMP signaling and eventually transmit odorant signals to achieve membrane depolarization. In immature olfactory sensory neurons, TAAR9 is coupled with GNAS/G(s) G alpha proteins. The chain is Trace amine-associated receptor 9 from Homo sapiens (Human).